The following is a 221-amino-acid chain: GTP cyclohydrolase III (221 aa).

The protein belongs to the archaeal-type GTP cyclohydrolase family.

The enzyme catalyses GTP + 3 H2O = 2-amino-5-formylamino-6-(5-phospho-D-ribosylamino)pyrimidin-4(3H)-one + 2 phosphate + 2 H(+). In terms of biological role, catalyzes the formation of 2-amino-5-formylamino-6-ribofuranosylamino-4(3H)-pyrimidinone ribonucleotide monophosphate and inorganic phosphate from GTP. Also has an independent pyrophosphate phosphohydrolase activity. This is GTP cyclohydrolase III from Pyrobaculum arsenaticum (strain DSM 13514 / JCM 11321 / PZ6).